The following is a 453-amino-acid chain: Nuclear distribution protein PAC1-2 (453 aa).

Residues 9 to 41 (QADELHKSIVAYLTANNLSTTAATLREELSLGE) enclose the LisH domain. A coiled-coil region spans residues 63-87 (VVRLQKKVMDLESRSVALQSELEHS). The segment at 84 to 108 (LEHSTPASLSKRKDPTSWLPRSPPR) is disordered. WD repeat units lie at residues 113–154 (SHQA…RTLK), 156–196 (HTRA…KNTR), 200–243 (GHDH…CIKT), 246–285 (GHTG…PESK), 290–350 (GHEN…IKTL), 352–391 (GHDN…RCVK), and 396–448 (AHGQ…DKVV).

This sequence belongs to the WD repeat LIS1/nudF family. In terms of assembly, self-associates. Interacts with NDL1 and dynein.

It localises to the cytoplasm. The protein localises to the cytoskeleton. Its subcellular location is the spindle pole. Positively regulates the activity of the minus-end directed microtubule motor protein dynein. May enhance dynein-mediated microtubule sliding by targeting dynein to the microtubule plus end. Required for nuclear migration during vegetative growth as well as development. Required for retrograde early endosome (EE) transport from the hyphal tip. Required for localization of dynein to the mitotic spindle poles. Recruits additional proteins to the dynein complex at SPBs. This Chaetomium globosum (strain ATCC 6205 / CBS 148.51 / DSM 1962 / NBRC 6347 / NRRL 1970) (Soil fungus) protein is Nuclear distribution protein PAC1-2.